The primary structure comprises 310 residues: tRNA pseudouridine synthase B (310 aa).

Aspartate 47 functions as the Nucleophile in the catalytic mechanism.

It belongs to the pseudouridine synthase TruB family. Type 1 subfamily.

It catalyses the reaction uridine(55) in tRNA = pseudouridine(55) in tRNA. Responsible for synthesis of pseudouridine from uracil-55 in the psi GC loop of transfer RNAs. The protein is tRNA pseudouridine synthase B of Psychromonas ingrahamii (strain DSM 17664 / CCUG 51855 / 37).